Consider the following 448-residue polypeptide: uncharacterized protein (448 aa).

Basic and acidic residues predominate over residues 187-198; that stretch reads SKGDRGDADDRG. Disordered regions lie at residues 187–221, 243–270, and 291–361; these read SKGDRGDADDRGPASVGSGGAPARGAGQQPELPTR, LQVPGGTSAAIPSASSTPSLPNLGGATM, and LSGL…LPNG. Residues 243 to 261 show a composition bias toward low complexity; it reads LQVPGGTSAAIPSASSTPS. Basic and acidic residues predominate over residues 307-334; that stretch reads FDERGQEVRDPADYEHANEPDERRADDR.

It to M.tuberculosis Rv0025 and Rv0739.

This is an uncharacterized protein from Mycobacterium tuberculosis (strain CDC 1551 / Oshkosh).